A 762-amino-acid polypeptide reads, in one-letter code: Probable inorganic carbon transporter subunit DabA (762 aa).

C279, D281, H461, and C476 together coordinate Zn(2+).

Belongs to the inorganic carbon transporter (TC 9.A.2) DabA family. In terms of assembly, forms a complex with DabB. It depends on Zn(2+) as a cofactor.

It is found in the cell inner membrane. In terms of biological role, part of an energy-coupled inorganic carbon pump. In Legionella pneumophila (strain Lens), this protein is Probable inorganic carbon transporter subunit DabA.